The chain runs to 550 residues: Epidermal growth factor-like protein 6 (550 aa).

Positions 1 to 18 (MQPPWGLALPLLLPWVTG) are cleaved as a signal peptide. The region spanning 55–90 (NKGVCEAMCEPRCKFGECVGPNKCRCFPGYTGKTCT) is the EGF-like 1 domain. 6 disulfides stabilise this stretch: C59/C72, C63/C78, C80/C89, C96/C107, C103/C116, and C118/C130. The region spanning 92 to 131 (DVNECGVKPRPCQHRCVNTHGSYKCFCLSGHMLLPDATCS) is the EGF-like 2; calcium-binding domain. Residues 135–171 (TCARLNCQYGCEDTEEGPRCVCPSSGLRLGPNGRVCL) enclose the EGF-like 3 domain. The 39-residue stretch at 172–210 (DIDECASSKAVCPSNRRCVNTFGSYYCKCHIGFELKYIG) folds into the EGF-like 4; calcium-binding domain. 5 disulfides stabilise this stretch: C176-C189, C183-C198, C221-C234, C228-C243, and C245-C256. The 41-residue stretch at 217 to 257 (DINECALNTHPCSPHANCLNTRGSFKCKCKQGYRGNGLQCS) folds into the EGF-like 5; calcium-binding domain. The tract at residues 295-354 (KMVTPRPASTRVPKVNLPYSSEEGVSRGRNYDGEQKKKEEGKRERLEEEKGEKTLRNEVE) is disordered. The segment covering 318-354 (GVSRGRNYDGEQKKKEEGKRERLEEEKGEKTLRNEVE) has biased composition (basic and acidic residues). Positions 327–357 (GEQKKKEEGKRERLEEEKGEKTLRNEVEQER) form a coiled coil. Residue N394 is glycosylated (N-linked (GlcNAc...) asparagine). The MAM domain maps to 397 to 543 (VDCSFDLGVC…VLLVSGLCPD (147 aa)).

It belongs to the nephronectin family. In terms of tissue distribution, expressed at basement membrane of pelage follicles (at protein level).

The protein localises to the secreted. The protein resides in the extracellular space. It is found in the extracellular matrix. Its subcellular location is the basement membrane. In terms of biological role, may bind integrin alpha-8/beta-1 and play a role in hair follicle morphogenesis. Promotes matrix assembly. This chain is Epidermal growth factor-like protein 6 (Egfl6), found in Mus musculus (Mouse).